Reading from the N-terminus, the 131-residue chain is D-ribose pyranase (131 aa).

H20 (proton donor) is an active-site residue. Residues D28, H98, and 120–122 (YAN) each bind substrate.

Belongs to the RbsD / FucU family. RbsD subfamily. As to quaternary structure, homodecamer.

It localises to the cytoplasm. The catalysed reaction is beta-D-ribopyranose = beta-D-ribofuranose. It functions in the pathway carbohydrate metabolism; D-ribose degradation; D-ribose 5-phosphate from beta-D-ribopyranose: step 1/2. Its function is as follows. Catalyzes the interconversion of beta-pyran and beta-furan forms of D-ribose. This chain is D-ribose pyranase, found in Bacillus licheniformis (strain ATCC 14580 / DSM 13 / JCM 2505 / CCUG 7422 / NBRC 12200 / NCIMB 9375 / NCTC 10341 / NRRL NRS-1264 / Gibson 46).